We begin with the raw amino-acid sequence, 757 residues long: Dolichyl-diphosphooligosaccharide--protein glycosyltransferase subunit stt-3 (757 aa).

The Cytoplasmic portion of the chain corresponds to 1-13; the sequence is MTSTTAARTASSR. Residues 14 to 34 form a helical membrane-spanning segment; sequence VGATTLLTIVVLALAWFVGFA. At 35–121 the chain is on the lumenal side; that stretch reads SRLFAIVRFE…VHIREVCVFL (87 aa). Residues 49-51 carry the DXD motif 1 motif; the sequence is EFD. Position 51 (Asp-51) interacts with Mn(2+). Residues 122–140 traverse the membrane as a helical segment; it reads APTFSGLTAIATYLLTKEL. The Cytoplasmic segment spans residues 141–142; it reads WS. The chain crosses the membrane as a helical span at residues 143 to 160; that stretch reads PGAGLFAACFIAISPGYT. At 161 to 171 the chain is on the lumenal side; it reads SRSVAGSYDNE. Residues Asp-169 and Glu-171 each coordinate Mn(2+). Positions 169–171 match the DXD motif 2 motif; that stretch reads DNE. A helical transmembrane segment spans residues 172–191; the sequence is GIAIFALQFTYYLWVKSLKT. The Cytoplasmic portion of the chain corresponds to 192 to 193; the sequence is GS. Residues 194–208 form a helical membrane-spanning segment; sequence IMWASLCALSYFYMV. Over 209 to 210 the chain is Lumenal; it reads SA. 2 consecutive transmembrane segments (helical) span residues 211 to 235 and 236 to 261; these read WGGYVFIINLIPLHALALIIMGRYS and SRLFVSYTSFYCLATILSMQVPFVGF. Residues 262–269 lie on the Lumenal side of the membrane; it reads QPVRTSEH. A helical membrane pass occupies residues 270–289; the sequence is MPAFGVFGLLQIVALMHYAR. Over 290–299 the chain is Cytoplasmic; sequence NRITRQQFMT. The helical transmembrane segment at 300 to 320 threads the bilayer; it reads LFVGGLTILGALSVVVYFALV. Topologically, residues 321-358 are lumenal; the sequence is WGGYVAPFSGRFYSLWDTGYAKIHIPIIASVSEHQPTT. An SVSE motif motif is present at residues 350–353; the sequence is SVSE. A helical transmembrane segment spans residues 359–381; it reads WVSFFFDLHITAAVFPVGLWYCI. At 382–387 the chain is on the cytoplasmic side; it reads KKVNDE. A helical transmembrane segment spans residues 388 to 404; that stretch reads RVFIILYAVSAVYFAGV. Over 405 to 408 the chain is Lumenal; the sequence is MVRL. Arg-407 lines the dolichyl diphosphooligosaccharide pocket. Residues 409–430 form a helical membrane-spanning segment; it reads MLTLTPAVCVLAGIGFSYTFEK. At 431 to 469 the chain is on the cytoplasmic side; it reads YLKDEETKERSSSQSGTTKDEKLYDKAAKNVKSRNANDG. Residues 470 to 495 traverse the membrane as a helical segment; that stretch reads DESGVSSNVRTIISIILVIFLLMFVV. Over 496 to 757 the chain is Lumenal; sequence HATYVTSNAY…IRPAPTASKA (262 aa). The interacts with target acceptor peptide in protein substrate stretch occupies residues 547–549; it reads WWD. A WWDYG motif motif is present at residues 547–551; it reads WWDYG. Residue Tyr-552 coordinates dolichyl diphosphooligosaccharide. 2 N-linked (GlcNAc...) asparagine glycosylation sites follow: Asn-559 and Asn-566. The N-linked (GlcNAc...) (high mannose) asparagine glycan is linked to Asn-570. Asn-584 carries N-linked (GlcNAc...) asparagine glycosylation. A DK motif motif is present at residues 614–621; sequence DINKFLWM. The tract at residues 721-757 is disordered; the sequence is RPTVKSEEATIPIKGKKATQGKNKKGVIRPAPTASKA. Over residues 734 to 747 the composition is skewed to basic residues; the sequence is KGKKATQGKNKKGV.

It belongs to the STT3 family. Component of the oligosaccharyltransferase (OST) complex. Mg(2+) is required as a cofactor. The cofactor is Mn(2+).

The protein resides in the endoplasmic reticulum membrane. It catalyses the reaction a di-trans,poly-cis-dolichyl diphosphooligosaccharide + L-asparaginyl-[protein] = N(4)-(oligosaccharide-(1-&gt;4)-N-acetyl-beta-D-glucosaminyl-(1-&gt;4)-N-acetyl-beta-D-glucosaminyl)-L-asparaginyl-[protein] + a di-trans,poly-cis-dolichyl diphosphate + H(+). Its pathway is protein modification; protein glycosylation. Its function is as follows. Catalytic subunit of the oligosaccharyl transferase (OST) complex that catalyzes the initial transfer of a defined glycan (Glc(3)Man(9)GlcNAc(2) in eukaryotes) from the lipid carrier dolichol-pyrophosphate to an asparagine residue within an Asn-X-Ser/Thr consensus motif in nascent polypeptide chains, the first step in protein N-glycosylation. N-glycosylation occurs cotranslationally and the complex associates with the Sec61 complex at the channel-forming translocon complex that mediates protein translocation across the endoplasmic reticulum (ER). All subunits are required for a maximal enzyme activity. This subunit contains the active site and the acceptor peptide and donor lipid-linked oligosaccharide (LLO) binding pockets. The polypeptide is Dolichyl-diphosphooligosaccharide--protein glycosyltransferase subunit stt-3 (Caenorhabditis elegans).